Consider the following 215-residue polypeptide: Pyrophosphatase PpaX (215 aa).

The active-site Nucleophile is the Asp-9.

The protein belongs to the HAD-like hydrolase superfamily. PpaX family. The cofactor is Mg(2+).

The enzyme catalyses diphosphate + H2O = 2 phosphate + H(+). Its function is as follows. Hydrolyzes pyrophosphate formed during P-Ser-HPr dephosphorylation by HPrK/P. Might play a role in controlling the intracellular pyrophosphate pool. This is Pyrophosphatase PpaX from Halalkalibacterium halodurans (strain ATCC BAA-125 / DSM 18197 / FERM 7344 / JCM 9153 / C-125) (Bacillus halodurans).